The chain runs to 126 residues: Small ribosomal subunit protein uS13 (126 aa).

Residues 93–126 (RRGLPVRGQRTKTNARTRKGPKRTVAGKKKAGRK) form a disordered region.

The protein belongs to the universal ribosomal protein uS13 family. Part of the 30S ribosomal subunit. Forms a loose heterodimer with protein S19. Forms two bridges to the 50S subunit in the 70S ribosome.

Its function is as follows. Located at the top of the head of the 30S subunit, it contacts several helices of the 16S rRNA. In the 70S ribosome it contacts the 23S rRNA (bridge B1a) and protein L5 of the 50S subunit (bridge B1b), connecting the 2 subunits; these bridges are implicated in subunit movement. Contacts the tRNAs in the A and P-sites. The protein is Small ribosomal subunit protein uS13 of Beutenbergia cavernae (strain ATCC BAA-8 / DSM 12333 / CCUG 43141 / JCM 11478 / NBRC 16432 / NCIMB 13614 / HKI 0122).